The following is a 60-amino-acid chain: Venom protein 4.1 (60 aa).

The N-terminal stretch at 1–26 (MKALCAILLVLFACSVMFEHFSISTA) is a signal peptide.

The protein belongs to the non-disulfide-bridged peptide (NDBP) superfamily. Expressed by the venom gland.

It is found in the secreted. In Lychas mucronatus (Chinese swimming scorpion), this protein is Venom protein 4.1.